A 155-amino-acid chain; its full sequence is 6,7-dimethyl-8-ribityllumazine synthase (155 aa).

5-amino-6-(D-ribitylamino)uracil contacts are provided by residues F23, 57 to 59 (AYE), and 81 to 83 (AVI). 86-87 (AT) contacts (2S)-2-hydroxy-3-oxobutyl phosphate. Catalysis depends on H89, which acts as the Proton donor. F114 lines the 5-amino-6-(D-ribitylamino)uracil pocket. R128 contacts (2S)-2-hydroxy-3-oxobutyl phosphate.

It belongs to the DMRL synthase family.

The catalysed reaction is (2S)-2-hydroxy-3-oxobutyl phosphate + 5-amino-6-(D-ribitylamino)uracil = 6,7-dimethyl-8-(1-D-ribityl)lumazine + phosphate + 2 H2O + H(+). It functions in the pathway cofactor biosynthesis; riboflavin biosynthesis; riboflavin from 2-hydroxy-3-oxobutyl phosphate and 5-amino-6-(D-ribitylamino)uracil: step 1/2. In terms of biological role, catalyzes the formation of 6,7-dimethyl-8-ribityllumazine by condensation of 5-amino-6-(D-ribitylamino)uracil with 3,4-dihydroxy-2-butanone 4-phosphate. This is the penultimate step in the biosynthesis of riboflavin. The protein is 6,7-dimethyl-8-ribityllumazine synthase of Desulfotalea psychrophila (strain LSv54 / DSM 12343).